The chain runs to 1086 residues: MAHIYRPKHHVRFVTASSLFDGHDASINIMRRILQASGAEVIHLGHNRSVEEIVNAAIQEDVQGIAVSSYQGGHMEFFKYMYDLLQERGASHIRIYGGGGGVIIPREIKELHEYGIARIFSPEDGRRLGLQGMINVMLEECDFPTVTVVTDELERLPSGDVQAIARLITLCEYRAEGENKEAAAAAEAAIEQVKALEKRVPVLGITGTGGAGKSSLTDELVRRFLNEIPDIKIAILSVDPTKQKTGGALLGDRIRMNSINSPRVYMRSLATRHSRTELSPAIRDAISVVKAAGFDLVIIETSGIGQGDAAITEVCDVSMYVMTSEFGAPTQLEKIDMIDYADLIVINKFERKGSEDAKRQVQKQYQRSHQLFDRDVSEMPVYGTIASQFNDPGTNTLFVALVDTINKKAGTNWKTSLKTVANVEKHNVIIPNERRYYLREIAETVRSYHRRAEQQVEVARRLFQIEGAIEAAKERGEAEDVIRALETLKADYEAKLTPESKRILATWEETKAKYAAKQFVTKVRDKEIVTELTTKTLSGLDIPKVVLPKFKDYGEILRWVYKENVPGSFPYTAGVFPFKRQGEDPKRQFAGEGTPERTNRRFHYLCKEDKAKRLSTAFDSVTLYGEDPDYRPDIFGKVGESGVSVCTLDDMKKLYKGFDLCDPLTSVSMTINGPAPILLAMFMNTAIDQQVEKKEAELGRPLTPEEYEQVKEWTLQTVRGTVQADILKEDQGQNTCIFSTDFALKMMGDIQEYFIKHRVRNYYSVSISGYHIAEAGANPITQLAFTLANGFTYVEYYLSRGMHIDDFAPNLSFFFSNGLDPEYSVIGRVARRIWAIVMREKYGANERSQKLKYHIQTSGRSLHAQEIDFNDIRTTLQALLAIYDNCNSLHTNAYDEAITTPTEESVRRAMAIQLIITKEFGLTKNENPLQGSFIIEELTDLVEEAVLQEFERLNDRGGVLGAMEMQYQRGKIQDESLYYETKKHTGELPIIGVNTFLNPNPPSEDELNNIQLARATYEEKETQIRNLREFQERNKDKAGPALERLKQVATSGGNIFEELMETVKVASLGQITRALYEVGGQYRRNM.

The B12-binding domain occupies 10-140 (HVRFVTASSL…QGMINVMLEE (131 aa)). Histidine 23 is an adenosylcob(III)alamin binding site. The segment at 153 to 407 (LERLPSGDVQ…FVALVDTINK (255 aa)) is GTPase chaperone MeaI. 210–215 (GAGKSS) contacts GTP. Mg(2+)-binding residues include serine 214, valine 238, aspartate 239, and aspartate 252. Arginine 255 is a binding site for GTP. Mg(2+) contacts are provided by glutamate 300 and threonine 301. GTP is bound at residue 347–350 (NKFE). The linker stretch occupies residues 408–570 (KAGTNWKTSL…YKENVPGSFP (163 aa)). Substrate is bound by residues phenylalanine 578, arginine 613, arginine 719, tyrosine 763, serine 812, arginine 847, and lysine 852. GTP contacts are provided by glutamate 964 and asparagine 1085.

The protein belongs to the IcmF family. As to quaternary structure, homodimer. The cofactor is adenosylcob(III)alamin. Mg(2+) is required as a cofactor.

It carries out the reaction 2-methylpropanoyl-CoA = butanoyl-CoA. It catalyses the reaction 3-methylbutanoyl-CoA = 2,2-dimethylpropanoyl-CoA. The catalysed reaction is GTP + H2O = GDP + phosphate + H(+). Catalyzes the reversible interconversion of isobutyryl-CoA and n-butyryl-CoA, and to a lesser extent, of pivalyl-CoA and isovaleryl-CoA, using radical chemistry. Also exhibits GTPase activity, associated with its G-protein domain (MeaI) that functions as a chaperone that assists cofactor delivery and proper holo-enzyme assembly. Also displays ATPase activity. Is not able to convert 3-hydroxybutyryl-CoA to 2-hydroxyisobutyryl-CoA. Does not exhibit methylmalonyl-CoA mutase (MCM) activity. This chain is Fused isobutyryl-CoA mutase, found in Geobacillus kaustophilus (strain HTA426).